Reading from the N-terminus, the 176-residue chain is NAD(P)H-quinone oxidoreductase subunit J (176 aa).

It belongs to the complex I 30 kDa subunit family. In terms of assembly, NDH-1 can be composed of about 15 different subunits; different subcomplexes with different compositions have been identified which probably have different functions.

It is found in the cellular thylakoid membrane. The enzyme catalyses a plastoquinone + NADH + (n+1) H(+)(in) = a plastoquinol + NAD(+) + n H(+)(out). The catalysed reaction is a plastoquinone + NADPH + (n+1) H(+)(in) = a plastoquinol + NADP(+) + n H(+)(out). In terms of biological role, NDH-1 shuttles electrons from an unknown electron donor, via FMN and iron-sulfur (Fe-S) centers, to quinones in the respiratory and/or the photosynthetic chain. The immediate electron acceptor for the enzyme in this species is believed to be plastoquinone. Couples the redox reaction to proton translocation, and thus conserves the redox energy in a proton gradient. Cyanobacterial NDH-1 also plays a role in inorganic carbon-concentration. In Nostoc punctiforme (strain ATCC 29133 / PCC 73102), this protein is NAD(P)H-quinone oxidoreductase subunit J.